The chain runs to 419 residues: Putative polyketide beta-ketoacyl synthase 2 (419 aa).

Residues 10 to 413 (TRRTAVTGIG…GSNAALVLRP (404 aa)) form the Ketosynthase family 3 (KS3) domain.

Belongs to the thiolase-like superfamily. Beta-ketoacyl-ACP synthases family.

Its pathway is antibiotic biosynthesis; curamycin biosynthesis. This chain is Putative polyketide beta-ketoacyl synthase 2 (curB), found in Streptomyces cyaneus (Streptomyces curacoi).